Reading from the N-terminus, the 89-residue chain is Small ribosomal subunit protein uS15 (89 aa).

Belongs to the universal ribosomal protein uS15 family. Part of the 30S ribosomal subunit. Forms a bridge to the 50S subunit in the 70S ribosome, contacting the 23S rRNA.

One of the primary rRNA binding proteins, it binds directly to 16S rRNA where it helps nucleate assembly of the platform of the 30S subunit by binding and bridging several RNA helices of the 16S rRNA. Its function is as follows. Forms an intersubunit bridge (bridge B4) with the 23S rRNA of the 50S subunit in the ribosome. In Shewanella baltica (strain OS223), this protein is Small ribosomal subunit protein uS15.